Consider the following 460-residue polypeptide: tRNA (guanine(10)-N(2))-methyltransferase TRMT11 (460 aa).

Alanine 2 is subject to N-acetylalanine.

This sequence belongs to the class I-like SAM-binding methyltransferase superfamily. TRM11 methyltransferase family. As to quaternary structure, part of the heterodimeric TRMT11-TRM112 methyltransferase complex; this complex forms an active tRNA methyltransferase, where TRMT112 acts as an activator of the catalytic subunit TRMT11.

It is found in the cytoplasm. The enzyme catalyses guanosine(10) in tRNA + S-adenosyl-L-methionine = N(2)-methylguanosine(10) in tRNA + S-adenosyl-L-homocysteine + H(+). Functionally, catalytic subunit of the TRMT11-TRM112 methyltransferase complex, that specifically mediates the S-adenosyl-L-methionine-dependent N(2)-methylation of guanosine nucleotide at position 10 (m2G10) in tRNAs. This is one of the major tRNA (guanine-N(2))-methyltransferases. This chain is tRNA (guanine(10)-N(2))-methyltransferase TRMT11, found in Mus musculus (Mouse).